Here is a 315-residue protein sequence, read N- to C-terminus: tRNA pseudouridine synthase B (315 aa).

The active-site Nucleophile is the Asp47.

It belongs to the pseudouridine synthase TruB family. Type 1 subfamily.

It carries out the reaction uridine(55) in tRNA = pseudouridine(55) in tRNA. In terms of biological role, responsible for synthesis of pseudouridine from uracil-55 in the psi GC loop of transfer RNAs. In Shewanella pealeana (strain ATCC 700345 / ANG-SQ1), this protein is tRNA pseudouridine synthase B.